The chain runs to 429 residues: Ribosomal RNA small subunit methyltransferase B (429 aa).

Residues 254–260 (CAAPGGK), Asp-277, Asp-303, and Asp-322 contribute to the S-adenosyl-L-methionine site. Cys-375 functions as the Nucleophile in the catalytic mechanism.

This sequence belongs to the class I-like SAM-binding methyltransferase superfamily. RsmB/NOP family.

It is found in the cytoplasm. The enzyme catalyses cytidine(967) in 16S rRNA + S-adenosyl-L-methionine = 5-methylcytidine(967) in 16S rRNA + S-adenosyl-L-homocysteine + H(+). Specifically methylates the cytosine at position 967 (m5C967) of 16S rRNA. This chain is Ribosomal RNA small subunit methyltransferase B, found in Shigella flexneri.